We begin with the raw amino-acid sequence, 238 residues long: Ribonuclease PH (238 aa).

Phosphate contacts are provided by residues arginine 86 and 124–126 (GTR).

The protein belongs to the RNase PH family. As to quaternary structure, homohexameric ring arranged as a trimer of dimers.

The catalysed reaction is tRNA(n+1) + phosphate = tRNA(n) + a ribonucleoside 5'-diphosphate. Functionally, phosphorolytic 3'-5' exoribonuclease that plays an important role in tRNA 3'-end maturation. Removes nucleotide residues following the 3'-CCA terminus of tRNAs; can also add nucleotides to the ends of RNA molecules by using nucleoside diphosphates as substrates, but this may not be physiologically important. Probably plays a role in initiation of 16S rRNA degradation (leading to ribosome degradation) during starvation. The polypeptide is Ribonuclease PH (Geobacter sulfurreducens (strain ATCC 51573 / DSM 12127 / PCA)).